Consider the following 1100-residue polypeptide: SLIT-ROBO Rho GTPase-activating protein 2 (1100 aa).

In terms of domain architecture, F-BAR spans 19–324; that stretch reads TQVKEIRAQL…AAENLEANSD (306 aa). Coiled-coil stretches lie at residues 170–201 and 363–400; these read YNMDSINAESKLKEAEKQEEKQMSRSVRHEEK and GELIQRCQQLQSRLSTLNIENEEVKKTMEATLQTIQDM. The span at 181–203 shows a compositional bias: basic and acidic residues; the sequence is LKEAEKQEEKQMSRSVRHEEKQT. A disordered region spans residues 181–210; that stretch reads LKEAEKQEEKQMSRSVRHEEKQTPRSPDSL. The Rho-GAP domain maps to 496 to 680; that stretch reads VRKQEAIQII…TIIIHHESIF (185 aa). Residues 738–797 form the SH3 domain; sequence SDPIEAIARFDYSGRTNRELSFKKGASLLLYSRASDDWWEGRHNGTEGLVPHQYIVVQDM. 2 disordered regions span residues 800–835 and 852–938; these read GYAGRGSPKADLEGSHDSVEEKVSTRASASSPTGGH and EATS…PLDP. The segment covering 807–823 has biased composition (basic and acidic residues); it reads PKADLEGSHDSVEEKVS. Over residues 919–932 the composition is skewed to polar residues; the sequence is RKSTPTGRSKSFSN. Residues 945–972 adopt a coiled-coil conformation; sequence EHSSQDIEATMNTALSELRELERQSNVK. Positions 986 to 1100 are disordered; it reads KSGGTSEPSS…PPPTDKSCPV (115 aa). Polar residues-rich tracts occupy residues 987-997 and 1008-1049; these read SGGTSEPSSPL and SQHP…GSTF. The segment covering 1067–1081 has biased composition (low complexity); that stretch reads SSSAGGSPAMGSPTT. Positions 1082 to 1094 are enriched in pro residues; it reads TIPPTPPPPPPPT.

The protein localises to the cell membrane. Its subcellular location is the cell projection. It localises to the dendritic spine. It is found in the postsynaptic density. The protein resides in the postsynaptic cell membrane. The protein localises to the lamellipodium. Its subcellular location is the cytoplasmic vesicle. It localises to the phagosome. It is found in the nucleus. The protein resides in the cytoplasm. The protein localises to the cytosol. Postsynaptic RAC1 GTPase activating protein (GAP) that plays a key role in neuronal morphogenesis and migration mainly during development of the cerebral cortex. Regulates excitatory and inhibitory synapse maturation and density in cortical pyramidal neurons. Mechanistically, acts by binding and deforming membranes, thereby regulating actin dynamics to regulate cell migration and differentiation. In Danio rerio (Zebrafish), this protein is SLIT-ROBO Rho GTPase-activating protein 2 (srgap2).